The sequence spans 672 residues: tRNA 5-methylaminomethyl-2-thiouridine biosynthesis bifunctional protein MnmC (672 aa).

The tRNA (mnm(5)s(2)U34)-methyltransferase stretch occupies residues 1 to 241 (MHKVQFADVH…KRECLQGVKA (241 aa)). The tract at residues 269-672 (IGGGIASVFS…LLKGSQVKQG (404 aa)) is FAD-dependent cmnm(5)s(2)U34 oxidoreductase.

The protein in the N-terminal section; belongs to the methyltransferase superfamily. tRNA (mnm(5)s(2)U34)-methyltransferase family. This sequence in the C-terminal section; belongs to the DAO family. It depends on FAD as a cofactor.

It is found in the cytoplasm. It catalyses the reaction 5-aminomethyl-2-thiouridine(34) in tRNA + S-adenosyl-L-methionine = 5-methylaminomethyl-2-thiouridine(34) in tRNA + S-adenosyl-L-homocysteine + H(+). Functionally, catalyzes the last two steps in the biosynthesis of 5-methylaminomethyl-2-thiouridine (mnm(5)s(2)U) at the wobble position (U34) in tRNA. Catalyzes the FAD-dependent demodification of cmnm(5)s(2)U34 to nm(5)s(2)U34, followed by the transfer of a methyl group from S-adenosyl-L-methionine to nm(5)s(2)U34, to form mnm(5)s(2)U34. The polypeptide is tRNA 5-methylaminomethyl-2-thiouridine biosynthesis bifunctional protein MnmC (Pasteurella multocida (strain Pm70)).